We begin with the raw amino-acid sequence, 632 residues long: DNA ligase (632 aa).

Residues 45 to 49 and 89 to 90 each bind NAD(+); these read NEDYD and SI. Catalysis depends on Lys127, which acts as the N6-AMP-lysine intermediate. The NAD(+) site is built by Arg143, Glu174, and Lys286. Zn(2+)-binding residues include Cys374, Cys377, Cys390, and Cys396. The BRCT domain maps to 561–632; that stretch reads DKRIVFTGKM…EADYLSKITM (72 aa).

This sequence belongs to the NAD-dependent DNA ligase family. LigA subfamily. Requires Mg(2+) as cofactor. Mn(2+) serves as cofactor.

It carries out the reaction NAD(+) + (deoxyribonucleotide)n-3'-hydroxyl + 5'-phospho-(deoxyribonucleotide)m = (deoxyribonucleotide)n+m + AMP + beta-nicotinamide D-nucleotide.. Its function is as follows. DNA ligase that catalyzes the formation of phosphodiester linkages between 5'-phosphoryl and 3'-hydroxyl groups in double-stranded DNA using NAD as a coenzyme and as the energy source for the reaction. It is essential for DNA replication and repair of damaged DNA. This chain is DNA ligase, found in Vesicomyosocius okutanii subsp. Calyptogena okutanii (strain HA).